We begin with the raw amino-acid sequence, 143 residues long: uncharacterized protein (143 aa).

Positions 1–14 (MPAAKKQIEEKPEV) are enriched in basic and acidic residues. The disordered stretch occupies residues 1-25 (MPAAKKQIEEKPEVEQDLGAPDFSD).

This is an uncharacterized protein from Pseudoalteromonas phage PM2 (Bacteriophage PM2).